The following is a 184-amino-acid chain: Probable DNA-directed RNA polymerase subunit delta (184 aa).

Residues 14–81 (LSMIEVARAI…GENVWALRSW (68 aa)) enclose the HTH HARE-type domain. Disordered regions lie at residues 88–107 (DEEVNHPEDEEEDDSRKHHK) and 118–184 (GDDD…DEDD). A compositionally biased stretch (acidic residues) spans 118 to 164 (GDDDIIDYDNDDPEDDDLDAATDDSDDDYSDDDSDYDEDNDDADDVL).

This sequence belongs to the RpoE family. In terms of assembly, RNAP is composed of a core of 2 alpha, a beta and a beta' subunits. The core is associated with a delta subunit and one of several sigma factors.

In terms of biological role, participates in both the initiation and recycling phases of transcription. In the presence of the delta subunit, RNAP displays an increased specificity of transcription, a decreased affinity for nucleic acids, and an increased efficiency of RNA synthesis because of enhanced recycling. The polypeptide is Probable DNA-directed RNA polymerase subunit delta (Lactobacillus acidophilus (strain ATCC 700396 / NCK56 / N2 / NCFM)).